The chain runs to 249 residues: tRNA pseudouridine synthase A (249 aa).

D53 acts as the Nucleophile in catalysis. Residue Y111 participates in substrate binding.

Belongs to the tRNA pseudouridine synthase TruA family. As to quaternary structure, homodimer.

It catalyses the reaction uridine(38/39/40) in tRNA = pseudouridine(38/39/40) in tRNA. Its function is as follows. Formation of pseudouridine at positions 38, 39 and 40 in the anticodon stem and loop of transfer RNAs. This is tRNA pseudouridine synthase A from Streptococcus pneumoniae (strain Taiwan19F-14).